We begin with the raw amino-acid sequence, 264 residues long: Thymidylate synthase (264 aa).

Arg21 serves as a coordination point for dUMP. (6R)-5,10-methylene-5,6,7,8-tetrahydrofolate is bound at residue His51. A dUMP-binding site is contributed by 126–127 (RR). The Nucleophile role is filled by Cys146. Residues 166–169 (RSAD), Asn177, and 207–209 (HLY) contribute to the dUMP site. Asp169 contributes to the (6R)-5,10-methylene-5,6,7,8-tetrahydrofolate binding site. Ala263 is a binding site for (6R)-5,10-methylene-5,6,7,8-tetrahydrofolate.

It belongs to the thymidylate synthase family. Bacterial-type ThyA subfamily. As to quaternary structure, homodimer.

The protein resides in the cytoplasm. The catalysed reaction is dUMP + (6R)-5,10-methylene-5,6,7,8-tetrahydrofolate = 7,8-dihydrofolate + dTMP. It functions in the pathway pyrimidine metabolism; dTTP biosynthesis. Functionally, catalyzes the reductive methylation of 2'-deoxyuridine-5'-monophosphate (dUMP) to 2'-deoxythymidine-5'-monophosphate (dTMP) while utilizing 5,10-methylenetetrahydrofolate (mTHF) as the methyl donor and reductant in the reaction, yielding dihydrofolate (DHF) as a by-product. This enzymatic reaction provides an intracellular de novo source of dTMP, an essential precursor for DNA biosynthesis. This Rhizobium etli (strain ATCC 51251 / DSM 11541 / JCM 21823 / NBRC 15573 / CFN 42) protein is Thymidylate synthase.